The following is a 548-amino-acid chain: Chaperonin GroEL 2 (548 aa).

ATP is bound by residues 30-33 (TLGP), Lys51, 87-91 (DGTTT), Gly415, and Asp496. The segment at 529-548 (KDAMPSPDMGGMGGMGGMGF) is disordered. Gly residues predominate over residues 538–548 (GGMGGMGGMGF).

It belongs to the chaperonin (HSP60) family. Forms a cylinder of 14 subunits composed of two heptameric rings stacked back-to-back. Interacts with the co-chaperonin GroES.

The protein localises to the cytoplasm. The catalysed reaction is ATP + H2O + a folded polypeptide = ADP + phosphate + an unfolded polypeptide.. Together with its co-chaperonin GroES, plays an essential role in assisting protein folding. The GroEL-GroES system forms a nano-cage that allows encapsulation of the non-native substrate proteins and provides a physical environment optimized to promote and accelerate protein folding. The sequence is that of Chaperonin GroEL 2 from Rhodospirillum rubrum (strain ATCC 11170 / ATH 1.1.1 / DSM 467 / LMG 4362 / NCIMB 8255 / S1).